Reading from the N-terminus, the 600-residue chain is Arginine--tRNA ligase (600 aa).

The 'HIGH' region signature appears at 132 to 142; that stretch reads ANPTGPLHVGH.

The protein belongs to the class-I aminoacyl-tRNA synthetase family. Monomer.

The protein resides in the cytoplasm. It catalyses the reaction tRNA(Arg) + L-arginine + ATP = L-arginyl-tRNA(Arg) + AMP + diphosphate. In Ralstonia nicotianae (strain ATCC BAA-1114 / GMI1000) (Ralstonia solanacearum), this protein is Arginine--tRNA ligase.